The following is a 391-amino-acid chain: Nucleosome assembly protein 1-like 1 (391 aa).

Over residues 1 to 10 (MADIDNKEQS) the composition is skewed to basic and acidic residues. Residues 1-32 (MADIDNKEQSELDQDLEDVEEVEEEETGEETK) form a disordered region. Residue Ala-2 is modified to N-acetylalanine. The residue at position 10 (Ser-10) is a Phosphoserine. Acidic residues predominate over residues 11-28 (ELDQDLEDVEEVEEEETG). Phosphothreonine occurs at positions 62 and 64. Position 69 is a phosphoserine (Ser-69). Residue Lys-116 is modified to N6-acetyllysine. The NAP1L motif motif lies at 125 to 150 (YEPTEEECEWKPDEEDEVSEELKEKA). The span at 131 to 143 (ECEWKPDEEDEVS) shows a compositional bias: acidic residues. The tract at residues 131–163 (ECEWKPDEEDEVSEELKEKAKIEDEKKDEEKED) is disordered. Position 143 is a phosphoserine (Ser-143). A compositionally biased stretch (basic and acidic residues) spans 144-163 (EELKEKAKIEDEKKDEEKED). The short motif at 273 to 279 (IKKKQKH) is the Nuclear localization signal element. Residues 346 to 376 (AIEDDDDDYDEEGEEADEEGEEEGDEENDPD) show a composition bias toward acidic residues. Residues 346–391 (AIEDDDDDYDEEGEEADEEGEEEGDEENDPDYDPKKDQNPAECKQQ) form a disordered region. 5-glutamyl polyglycine occurs at positions 359 and 360. Residues 377-391 (YDPKKDQNPAECKQQ) show a composition bias toward basic and acidic residues. Cys-388 bears the Cysteine methyl ester mark. Cys-388 carries S-farnesyl cysteine lipidation. A propeptide spans 389–391 (KQQ) (removed in mature form).

Belongs to the nucleosome assembly protein (NAP) family. Homodimer. The dimer binds strongly and sequentially to single and double H2A-H2B heterodimers. Interacts with ERCC6; this interaction increases ERCC6 processivity. Interacts with RAD54. Interacts with SETD1A. In terms of processing, polyglycylated by TTLL10 on glutamate residues, resulting in polyglycine chains on the gamma-carboxyl group. Both polyglutamylation and polyglycylation modifications can coexist on the same protein on adjacent residues, and lowering polyglycylation levels increases polyglutamylation, and reciprocally. Polyglutamylated by TTLL4 on glutamate residues, resulting in polyglutamate chains on the gamma-carboxyl group. Both polyglutamylation and polyglycylation modifications can coexist on the same protein on adjacent residues, and lowering polyglycylation levels increases polyglutamylation, and reciprocally. Highly expressed in the brain (at protein level). High expression in cerebral cortex, not in cerebellar cortex.

The protein resides in the nucleus. It localises to the cytoplasm. Its subcellular location is the melanosome. Its function is as follows. Histone chaperone that plays a role in the nuclear import of H2A-H2B and nucleosome assembly. Also participates in several important DNA repair mechanisms: greatly enhances ERCC6-mediated chromatin remodeling which is essential for transcription-coupled nucleotide excision DNA repair. Also stimulates homologous recombination (HR) by RAD51 and RAD54 which is essential in mitotic DNA double strand break (DSB) repair. Plays a key role in the regulation of embryonic neurogenesis. Promotes the proliferation of neural progenitors and inhibits neuronal differentiation during cortical development. Regulates neurogenesis via the modulation of RASSF10; regulates RASSF10 expression by promoting SETD1A-mediated H3K4 methylation at the RASSF10 promoter. In Mus musculus (Mouse), this protein is Nucleosome assembly protein 1-like 1 (Nap1l1).